The following is a 361-amino-acid chain: Transcription factor MafA (361 aa).

Ser-14 is subject to Phosphoserine. Lys-32 is covalently cross-linked (Glycyl lysine isopeptide (Lys-Gly) (interchain with G-Cter in SUMO2)). Disordered stretches follow at residues 40–105 and 175–228; these read RFCH…VGGA and GGAD…AGHH. Over residues 46 to 76 the composition is skewed to low complexity; it reads PPGSLSSTPLSTPCSSVPSSPSFCAPSPGTG. Ser-49 is modified (phosphoserine). Residues Thr-53 and Thr-57 each carry the phosphothreonine modification. Ser-61 and Ser-65 each carry phosphoserine. A compositionally biased stretch (basic residues) spans 183–211; sequence GHHHGAHHTAHHHHSAHHHHHHHHHHGGS. The span at 212-226 shows a compositional bias: gly residues; it reads GHHGGGAGHGGGGAG. A basic motif region spans residues 262 to 287; the sequence is RLKQKRRTLKNRGYAQSCRFKRVQQR. The bZIP domain maps to 262-325; the sequence is RLKQKRRTLK…DLYKEKYEKL (64 aa). The segment at 290–311 is leucine-zipper; sequence LESEKCQLQSQVEQLKLEVGRL. The tract at residues 324 to 361 is disordered; it reads KLAGRGGPGGAGGAGFPREPSPAQAGPGAAKGAPDFFL. The segment covering 327–338 has biased composition (gly residues); sequence GRGGPGGAGGAG. Residues 345–361 show a composition bias toward low complexity; it reads PAQAGPGAAKGAPDFFL.

The protein belongs to the bZIP family. Forms homodimers. Monomers and dimers are able to bind DNA, but the off-rate is faster for monomers. Interacts with NEUROD1 and PDX1. May interact with MAFB, FOS, JUN and PCAF. In terms of processing, ubiquitinated, leading to its degradation by the proteasome. Phosphorylated at tyrosines.

It localises to the nucleus. In terms of biological role, transcription factor that activates insulin gene expression. Acts synergistically with NEUROD1/BETA2 and PDX1. Binds the insulin enhancer C1/RIPE3b element. Binds to consensus TRE-type MARE 5'-TGCTGACTCAGCA-3' DNA sequence. This chain is Transcription factor MafA (Mafa), found in Rattus norvegicus (Rat).